A 194-amino-acid chain; its full sequence is Accessory gene regulator protein B (194 aa).

A run of 5 helical transmembrane segments spans residues 44-64, 80-100, 107-127, 142-162, and 163-183; these read IVVYGLAIIFHTFFYTLLTHL, SSLLCHIQNIIFFIIFPYLII, FVLLSMALVGLIITILYAPAA, KILSIFLYCTIVVISLVTKEP, and VNKLILFGVILESLTLLPIFF.

It belongs to the AgrB family.

Its subcellular location is the cell membrane. Its function is as follows. Essential for the production of a quorum sensing system signal molecule, the autoinducing peptide (AIP). This quorum sensing system is responsible for the regulation of the expression of virulence factor genes. Involved in the proteolytic processing of AgrD, the precursor of AIP. This chain is Accessory gene regulator protein B, found in Staphylococcus epidermidis.